The chain runs to 362 residues: Glutamate 5-kinase (362 aa).

Lys-3 contacts ATP. The substrate site is built by Ser-43, Asp-128, and Asn-140. ATP-binding positions include 160–161 and 202–208; these read TD and TGGMRTK. In terms of domain architecture, PUA spans 267–348; that stretch reads PGTILIDAGA…REIEPILGYS (82 aa).

It belongs to the glutamate 5-kinase family.

Its subcellular location is the cytoplasm. It carries out the reaction L-glutamate + ATP = L-glutamyl 5-phosphate + ADP. Its pathway is amino-acid biosynthesis; L-proline biosynthesis; L-glutamate 5-semialdehyde from L-glutamate: step 1/2. Functionally, catalyzes the transfer of a phosphate group to glutamate to form L-glutamate 5-phosphate. The chain is Glutamate 5-kinase from Xanthomonas campestris pv. campestris (strain 8004).